Reading from the N-terminus, the 156-residue chain is MTEKRLAQISVVLSTIIIMTYAFLSSYFLNKPLNLSSADLMYFALSNLLSLSLPFVCAWFPYLFVRPAAVTGSALSAFGLFLFFAITSSTMDDPKGAAAIWVIYFFWLIGAALAGVYPALFKPHFFTKTATRALVLSALFTVVVSFIIGFLISRIA.

The next 5 membrane-spanning stretches (helical) occupy residues 7–29, 42–64, 69–88, 98–120, and 133–155; these read AQISVVLSTIIIMTYAFLSSYFL, YFALSNLLSLSLPFVCAWFPYLF, AVTGSALSAFGLFLFFAITS, AAIWVIYFFWLIGAALAGVYPAL, and ALVLSALFTVVVSFIIGFLISRI.

The protein resides in the cell membrane. This is an uncharacterized protein from Pasteurella multocida (strain Pm70).